The sequence spans 373 residues: Chaperone protein DnaJ (373 aa).

The 66-residue stretch at 4–69 folds into the J domain; that stretch reads DYYETLSVER…SKRRIYDTYG (66 aa). The CR-type zinc finger occupies 131 to 209; it reads GVSKEVKLSR…CHGEGLVKKT (79 aa). Cys-144, Cys-147, Cys-161, Cys-164, Cys-183, Cys-186, Cys-197, and Cys-200 together coordinate Zn(2+). CXXCXGXG motif repeat units lie at residues 144–151, 161–168, 183–190, and 197–204; these read CWTCEGTG, CPTCNGRG, CPECEGEG, and CNDCHGEG.

This sequence belongs to the DnaJ family. In terms of assembly, homodimer. Requires Zn(2+) as cofactor.

It is found in the cytoplasm. In terms of biological role, participates actively in the response to hyperosmotic and heat shock by preventing the aggregation of stress-denatured proteins and by disaggregating proteins, also in an autonomous, DnaK-independent fashion. Unfolded proteins bind initially to DnaJ; upon interaction with the DnaJ-bound protein, DnaK hydrolyzes its bound ATP, resulting in the formation of a stable complex. GrpE releases ADP from DnaK; ATP binding to DnaK triggers the release of the substrate protein, thus completing the reaction cycle. Several rounds of ATP-dependent interactions between DnaJ, DnaK and GrpE are required for fully efficient folding. Also involved, together with DnaK and GrpE, in the DNA replication of plasmids through activation of initiation proteins. The chain is Chaperone protein DnaJ from Desulfotalea psychrophila (strain LSv54 / DSM 12343).